The following is a 476-amino-acid chain: Stromelysin-2 (476 aa).

Residues 1-17 (MMHLAFLVLLCLPVCSA) form the signal peptide. The propeptide at 18–98 (YPLSGAAKEE…PRCGVPDVGH (81 aa)) is activation peptide. Positions 89–96 (PRCGVPDV) match the Cysteine switch motif. Positions 91, 167, 169, 182, 195, and 217 each coordinate Zn(2+). E218 is an active-site residue. Positions 221 and 227 each coordinate Zn(2+). Hemopexin repeat units follow at residues 286 to 335 (PAKC…WPSL), 336 to 382 (PSYL…GFPP), 384 to 432 (IRKI…FPGV), and 433 to 476 (EPKV…WLHC). A disulfide bridge connects residues C289 and C476.

This sequence belongs to the peptidase M10A family. Requires Zn(2+) as cofactor. Ca(2+) is required as a cofactor.

Its subcellular location is the secreted. The protein localises to the extracellular space. It localises to the extracellular matrix. It carries out the reaction Similar to stromelysin 1, but action on collagen types III, IV and V is weak.. In terms of biological role, can degrade fibronectin, gelatins of type I, III, IV, and V; weakly collagens III, IV, and V. Activates procollagenase. This chain is Stromelysin-2 (MMP10), found in Homo sapiens (Human).